A 348-amino-acid polypeptide reads, in one-letter code: NADH-ubiquinone oxidoreductase chain 2 (348 aa).

11 consecutive transmembrane segments (helical) span residues 1-21 (MMTLILILGIFLGTMTTMFSS), 23-43 (WFFAWLGLEINMMAIIPMMLF), 56-76 (YFISQAVASSTIILASSWNYF), 92-112 (ITLIILALLLKLGLAPLHFWL), 123-143 (MGLIISTWQKLAPLTLLIQVS), 148-168 (NMYILISISVMSVLAGGFGGL), 176-196 (LLAYSSISHMGWIVGVMAVSA), 198-218 (LSWVTTVIYLIINFSIFTILI), 242-262 (CILVLLSLGGLPPFTGFFLKL), 272-292 (SLILMTILLMAGSLISLFFYL), and 321-341 (LLFNLMFLFSILLLPLSPFMI).

Belongs to the complex I subunit 2 family.

Its subcellular location is the mitochondrion inner membrane. The enzyme catalyses a ubiquinone + NADH + 5 H(+)(in) = a ubiquinol + NAD(+) + 4 H(+)(out). Functionally, core subunit of the mitochondrial membrane respiratory chain NADH dehydrogenase (Complex I) that is believed to belong to the minimal assembly required for catalysis. Complex I functions in the transfer of electrons from NADH to the respiratory chain. The immediate electron acceptor for the enzyme is believed to be ubiquinone. This chain is NADH-ubiquinone oxidoreductase chain 2 (MT-ND2), found in Myxine glutinosa (Atlantic hagfish).